Reading from the N-terminus, the 596-residue chain is Aspartate--tRNA(Asp/Asn) ligase (596 aa).

Residue Glu173 participates in L-aspartate binding. Positions 197–200 are aspartate; it reads QLFK. Position 219 (Arg219) interacts with L-aspartate. ATP-binding positions include 219–221 and Gln228; that span reads RDE. His450 is a binding site for L-aspartate. Glu485 contacts ATP. Arg492 lines the L-aspartate pocket. An ATP-binding site is contributed by 537-540; the sequence is GLDR.

It belongs to the class-II aminoacyl-tRNA synthetase family. Type 1 subfamily. As to quaternary structure, homodimer.

Its subcellular location is the cytoplasm. It carries out the reaction tRNA(Asx) + L-aspartate + ATP = L-aspartyl-tRNA(Asx) + AMP + diphosphate. Its function is as follows. Aspartyl-tRNA synthetase with relaxed tRNA specificity since it is able to aspartylate not only its cognate tRNA(Asp) but also tRNA(Asn). Reaction proceeds in two steps: L-aspartate is first activated by ATP to form Asp-AMP and then transferred to the acceptor end of tRNA(Asp/Asn). This is Aspartate--tRNA(Asp/Asn) ligase from Hydrogenovibrio crunogenus (strain DSM 25203 / XCL-2) (Thiomicrospira crunogena).